Here is a 687-residue protein sequence, read N- to C-terminus: Glycine--tRNA ligase beta subunit (687 aa).

It belongs to the class-II aminoacyl-tRNA synthetase family. As to quaternary structure, tetramer of two alpha and two beta subunits.

The protein resides in the cytoplasm. It carries out the reaction tRNA(Gly) + glycine + ATP = glycyl-tRNA(Gly) + AMP + diphosphate. The polypeptide is Glycine--tRNA ligase beta subunit (Trichlorobacter lovleyi (strain ATCC BAA-1151 / DSM 17278 / SZ) (Geobacter lovleyi)).